The following is a 106-amino-acid chain: ATP-dependent Clp protease adapter protein ClpS (106 aa).

The protein belongs to the ClpS family. Binds to the N-terminal domain of the chaperone ClpA.

Functionally, involved in the modulation of the specificity of the ClpAP-mediated ATP-dependent protein degradation. The chain is ATP-dependent Clp protease adapter protein ClpS from Vibrio parahaemolyticus serotype O3:K6 (strain RIMD 2210633).